Reading from the N-terminus, the 545-residue chain is Bifunctional purine biosynthesis protein PurH (545 aa).

Positions 1 to 150 constitute an MGS-like domain; it reads MTNTNRPIRR…KNHATVAIVT (150 aa).

Belongs to the PurH family.

It carries out the reaction (6R)-10-formyltetrahydrofolate + 5-amino-1-(5-phospho-beta-D-ribosyl)imidazole-4-carboxamide = 5-formamido-1-(5-phospho-D-ribosyl)imidazole-4-carboxamide + (6S)-5,6,7,8-tetrahydrofolate. The catalysed reaction is IMP + H2O = 5-formamido-1-(5-phospho-D-ribosyl)imidazole-4-carboxamide. The protein operates within purine metabolism; IMP biosynthesis via de novo pathway; 5-formamido-1-(5-phospho-D-ribosyl)imidazole-4-carboxamide from 5-amino-1-(5-phospho-D-ribosyl)imidazole-4-carboxamide (10-formyl THF route): step 1/1. Its pathway is purine metabolism; IMP biosynthesis via de novo pathway; IMP from 5-formamido-1-(5-phospho-D-ribosyl)imidazole-4-carboxamide: step 1/1. This is Bifunctional purine biosynthesis protein PurH from Bifidobacterium longum (strain DJO10A).